The primary structure comprises 210 residues: Protein-methionine-sulfoxide reductase heme-binding subunit MsrQ (210 aa).

The next 4 membrane-spanning stretches (helical) occupy residues 15–35 (DTLV…WLAW), 89–109 (LFAF…DLFF), 122–142 (PFIT…VTST), and 160–180 (LVYL…KADH).

The protein belongs to the MsrQ family. In terms of assembly, heterodimer of a catalytic subunit (MsrP) and a heme-binding subunit (MsrQ). Requires FMN as cofactor. Heme b is required as a cofactor.

The protein resides in the cell inner membrane. Its function is as follows. Part of the MsrPQ system that repairs oxidized periplasmic proteins containing methionine sulfoxide residues (Met-O), using respiratory chain electrons. Thus protects these proteins from oxidative-stress damage caused by reactive species of oxygen and chlorine generated by the host defense mechanisms. MsrPQ is essential for the maintenance of envelope integrity under bleach stress, rescuing a wide series of structurally unrelated periplasmic proteins from methionine oxidation. MsrQ provides electrons for reduction to the reductase catalytic subunit MsrP, using the quinone pool of the respiratory chain. This Caulobacter vibrioides (strain ATCC 19089 / CIP 103742 / CB 15) (Caulobacter crescentus) protein is Protein-methionine-sulfoxide reductase heme-binding subunit MsrQ.